Reading from the N-terminus, the 378-residue chain is SPbeta prophage-derived uncharacterized protein YorJ (378 aa).

In Bacillus subtilis (strain 168), this protein is SPbeta prophage-derived uncharacterized protein YorJ (yorJ).